The sequence spans 191 residues: NADH-quinone oxidoreductase subunit B 2 (191 aa).

[4Fe-4S] cluster-binding residues include cysteine 69, cysteine 70, cysteine 134, and cysteine 164.

Belongs to the complex I 20 kDa subunit family. In terms of assembly, NDH-1 is composed of 14 different subunits. Subunits NuoB, C, D, E, F, and G constitute the peripheral sector of the complex. [4Fe-4S] cluster serves as cofactor.

The protein localises to the cell inner membrane. It carries out the reaction a quinone + NADH + 5 H(+)(in) = a quinol + NAD(+) + 4 H(+)(out). Its function is as follows. NDH-1 shuttles electrons from NADH, via FMN and iron-sulfur (Fe-S) centers, to quinones in the respiratory chain. Couples the redox reaction to proton translocation (for every two electrons transferred, four hydrogen ions are translocated across the cytoplasmic membrane), and thus conserves the redox energy in a proton gradient. This is NADH-quinone oxidoreductase subunit B 2 from Gluconacetobacter diazotrophicus (strain ATCC 49037 / DSM 5601 / CCUG 37298 / CIP 103539 / LMG 7603 / PAl5).